An 80-amino-acid polypeptide reads, in one-letter code: Cell division protein ZapB (80 aa).

Positions F3 to E80 form a coiled coil.

This sequence belongs to the ZapB family. As to quaternary structure, homodimer. The ends of the coiled-coil dimer bind to each other, forming polymers. Interacts with FtsZ.

It localises to the cytoplasm. Functionally, non-essential, abundant cell division factor that is required for proper Z-ring formation. It is recruited early to the divisome by direct interaction with FtsZ, stimulating Z-ring assembly and thereby promoting cell division earlier in the cell cycle. Its recruitment to the Z-ring requires functional FtsA or ZipA. This is Cell division protein ZapB from Vibrio atlanticus (strain LGP32) (Vibrio splendidus (strain Mel32)).